Reading from the N-terminus, the 359-residue chain is S-adenosylmethionine:tRNA ribosyltransferase-isomerase (359 aa).

Belongs to the QueA family. In terms of assembly, monomer.

It is found in the cytoplasm. It catalyses the reaction 7-aminomethyl-7-carbaguanosine(34) in tRNA + S-adenosyl-L-methionine = epoxyqueuosine(34) in tRNA + adenine + L-methionine + 2 H(+). It participates in tRNA modification; tRNA-queuosine biosynthesis. Its function is as follows. Transfers and isomerizes the ribose moiety from AdoMet to the 7-aminomethyl group of 7-deazaguanine (preQ1-tRNA) to give epoxyqueuosine (oQ-tRNA). The protein is S-adenosylmethionine:tRNA ribosyltransferase-isomerase of Synechococcus elongatus (strain ATCC 33912 / PCC 7942 / FACHB-805) (Anacystis nidulans R2).